We begin with the raw amino-acid sequence, 180 residues long: Ribulose bisphosphate carboxylase small subunit, chloroplastic (180 aa).

Residues 1-56 constitute a chloroplast transit peptide; the sequence is MASSVLSSAAVATRSNVAQANMVAPFTGLKSAASFPVSRKQNLDITSIASNGGRVQ.

It belongs to the RuBisCO small chain family. In terms of assembly, heterohexadecamer of 8 large and 8 small subunits. (Microbial infection) Binds to tobamovirus movement protein at the plasmodesmata (e.g. tomato mosaic virus MP AC P69513); this interaction seems required for viral systemic movement.

The protein localises to the plastid. Its subcellular location is the chloroplast. It is found in the cell junction. The protein resides in the plasmodesma. Its function is as follows. RuBisCO catalyzes two reactions: the carboxylation of D-ribulose 1,5-bisphosphate, the primary event in carbon dioxide fixation, as well as the oxidative fragmentation of the pentose substrate. Both reactions occur simultaneously and in competition at the same active site. Although the small subunit is not catalytic it is essential for maximal activity. Involved in antiviral defenses. (Microbial infection) Required for tobamovirus movement (e.g. tobacco mosaic virus (TMV)). This Nicotiana benthamiana protein is Ribulose bisphosphate carboxylase small subunit, chloroplastic.